The chain runs to 564 residues: Potassium-transporting ATPase potassium-binding subunit (564 aa).

10 consecutive transmembrane segments (helical) span residues 4 to 24 (YDYL…PWLG), 67 to 87 (TLAL…VLLL), 135 to 155 (IGLT…LVAL), 179 to 199 (LYGL…QGVP), 258 to 278 (FEVA…GHYV), 286 to 306 (AIIA…LWSE), 382 to 402 (AGLY…GLMI), 420 to 440 (LLVA…AIAA), 487 to 507 (VMIG…VLAL), and 534 to 554 (LLLL…LALG).

Belongs to the KdpA family. In terms of assembly, the system is composed of three essential subunits: KdpA, KdpB and KdpC.

Its subcellular location is the cell inner membrane. In terms of biological role, part of the high-affinity ATP-driven potassium transport (or Kdp) system, which catalyzes the hydrolysis of ATP coupled with the electrogenic transport of potassium into the cytoplasm. This subunit binds the periplasmic potassium ions and delivers the ions to the membrane domain of KdpB through an intramembrane tunnel. This chain is Potassium-transporting ATPase potassium-binding subunit, found in Pseudomonas entomophila (strain L48).